A 315-amino-acid polypeptide reads, in one-letter code: Acetyl-coenzyme A carboxylase carboxyl transferase subunit alpha (315 aa).

Positions 39-293 (RLQDKSSTLT…RGELASQLAM (255 aa)) constitute a CoA carboxyltransferase C-terminal domain.

It belongs to the AccA family. As to quaternary structure, acetyl-CoA carboxylase is a heterohexamer composed of biotin carboxyl carrier protein (AccB), biotin carboxylase (AccC) and two subunits each of ACCase subunit alpha (AccA) and ACCase subunit beta (AccD).

The protein localises to the cytoplasm. It catalyses the reaction N(6)-carboxybiotinyl-L-lysyl-[protein] + acetyl-CoA = N(6)-biotinyl-L-lysyl-[protein] + malonyl-CoA. Its pathway is lipid metabolism; malonyl-CoA biosynthesis; malonyl-CoA from acetyl-CoA: step 1/1. Its function is as follows. Component of the acetyl coenzyme A carboxylase (ACC) complex. First, biotin carboxylase catalyzes the carboxylation of biotin on its carrier protein (BCCP) and then the CO(2) group is transferred by the carboxyltransferase to acetyl-CoA to form malonyl-CoA. This is Acetyl-coenzyme A carboxylase carboxyl transferase subunit alpha from Pseudomonas fluorescens (strain SBW25).